Consider the following 386-residue polypeptide: 23S rRNA (uracil(747)-C(5))-methyltransferase RlmC (386 aa).

4 residues coordinate [4Fe-4S] cluster: C7, C15, C18, and C94. S-adenosyl-L-methionine contacts are provided by Q219, F248, E269, and N316. Residue C343 is the Nucleophile of the active site.

The protein belongs to the class I-like SAM-binding methyltransferase superfamily. RNA M5U methyltransferase family. RlmC subfamily.

The enzyme catalyses uridine(747) in 23S rRNA + S-adenosyl-L-methionine = 5-methyluridine(747) in 23S rRNA + S-adenosyl-L-homocysteine + H(+). In terms of biological role, catalyzes the formation of 5-methyl-uridine at position 747 (m5U747) in 23S rRNA. This is 23S rRNA (uracil(747)-C(5))-methyltransferase RlmC from Shewanella oneidensis (strain ATCC 700550 / JCM 31522 / CIP 106686 / LMG 19005 / NCIMB 14063 / MR-1).